A 226-amino-acid chain; its full sequence is Protein-L-isoaspartate O-methyltransferase (226 aa).

The active site involves Ser-75.

The protein belongs to the methyltransferase superfamily. L-isoaspartyl/D-aspartyl protein methyltransferase family.

The protein localises to the cytoplasm. It catalyses the reaction [protein]-L-isoaspartate + S-adenosyl-L-methionine = [protein]-L-isoaspartate alpha-methyl ester + S-adenosyl-L-homocysteine. Its function is as follows. Catalyzes the methyl esterification of L-isoaspartyl residues in peptides and proteins that result from spontaneous decomposition of normal L-aspartyl and L-asparaginyl residues. It plays a role in the repair and/or degradation of damaged proteins. This is Protein-L-isoaspartate O-methyltransferase from Lawsonia intracellularis (strain PHE/MN1-00).